The following is a 195-amino-acid chain: MSVLVPMVVEQTSRGERAYDIYSRLLKDRVIFLVGQVEDHMANLAIAQMLFLESENPNKDINLYINSPGGAVTSAMAIYDTMQFVKPDVRTLCIGQAASAGALLLAGGAKGKRHCLPHSSVMIHQVLGGYQGQGTDIQIHAKQTQRVSDQLNQILAKHTGKDIERVEKDTNRDYFLTPEEAVEYGLIDSIFKERP.

Ser99 acts as the Nucleophile in catalysis. Residue His124 is part of the active site.

The protein belongs to the peptidase S14 family. Fourteen ClpP subunits assemble into 2 heptameric rings which stack back to back to give a disk-like structure with a central cavity, resembling the structure of eukaryotic proteasomes.

The protein localises to the cytoplasm. It carries out the reaction Hydrolysis of proteins to small peptides in the presence of ATP and magnesium. alpha-casein is the usual test substrate. In the absence of ATP, only oligopeptides shorter than five residues are hydrolyzed (such as succinyl-Leu-Tyr-|-NHMec, and Leu-Tyr-Leu-|-Tyr-Trp, in which cleavage of the -Tyr-|-Leu- and -Tyr-|-Trp bonds also occurs).. In terms of biological role, cleaves peptides in various proteins in a process that requires ATP hydrolysis. Has a chymotrypsin-like activity. Plays a major role in the degradation of misfolded proteins. In Coxiella burnetii (strain RSA 331 / Henzerling II), this protein is ATP-dependent Clp protease proteolytic subunit.